A 432-amino-acid polypeptide reads, in one-letter code: Peptidase B (432 aa).

K196 and D201 together coordinate Mn(2+). Residue K208 is part of the active site. Residues D219, D278, and E280 each contribute to the Mn(2+) site. R282 is an active-site residue.

This sequence belongs to the peptidase M17 family. Homohexamer. Requires Mn(2+) as cofactor.

The protein localises to the cytoplasm. It carries out the reaction Release of an N-terminal amino acid, Xaa, from a peptide or arylamide. Xaa is preferably Glu or Asp but may be other amino acids, including Leu, Met, His, Cys and Gln.. Functionally, probably plays an important role in intracellular peptide degradation. The chain is Peptidase B from Yersinia pestis bv. Antiqua (strain Antiqua).